We begin with the raw amino-acid sequence, 281 residues long: Ornithine lipid ester-linked acyl 2-hydroxylase (281 aa).

A compositionally biased stretch (polar residues) spans methionine 1–glycine 24. Residues methionine 1–alanine 29 are disordered.

The protein belongs to the aspartyl/asparaginyl beta-hydroxylase family.

The catalysed reaction is an N(2)-[(3R)-3-(2-saturated-acyloxy)acyl]-L-ornithine lipid + 2-oxoglutarate + O2 = a 2-hydroxyornithine lipid + succinate + CO2. It participates in lipid metabolism. Involved in the biosynthesis of ornithine lipids (OLs), which are phosphorus-free membrane lipids. Catalyzes the hydroxylation at the 2 position of the secondary fatty acid of OL. Contributes to symbiotic performance and acid tolerance. This chain is Ornithine lipid ester-linked acyl 2-hydroxylase, found in Rhizobium tropici.